The sequence spans 220 residues: Deoxyribose-phosphate aldolase 2 (220 aa).

Asp89 (proton donor/acceptor) is an active-site residue. Lys151 functions as the Schiff-base intermediate with acetaldehyde in the catalytic mechanism. Catalysis depends on Lys180, which acts as the Proton donor/acceptor.

The protein belongs to the DeoC/FbaB aldolase family. DeoC type 1 subfamily.

The protein localises to the cytoplasm. The enzyme catalyses 2-deoxy-D-ribose 5-phosphate = D-glyceraldehyde 3-phosphate + acetaldehyde. It functions in the pathway carbohydrate degradation; 2-deoxy-D-ribose 1-phosphate degradation; D-glyceraldehyde 3-phosphate and acetaldehyde from 2-deoxy-alpha-D-ribose 1-phosphate: step 2/2. Functionally, catalyzes a reversible aldol reaction between acetaldehyde and D-glyceraldehyde 3-phosphate to generate 2-deoxy-D-ribose 5-phosphate. The protein is Deoxyribose-phosphate aldolase 2 of Staphylococcus aureus (strain MSSA476).